Here is a 578-residue protein sequence, read N- to C-terminus: Probable cytochrome c oxidase subunit 1-alpha (578 aa).

The tract at residues 1–21 (MSILNEPQGASAAEDSYENEL) is disordered. Residues 44–64 (IGTMYLVTSFAFFVIGGVMAL) form a helical membrane-spanning segment. A Fe(II)-heme a-binding site is contributed by histidine 90. The next 6 membrane-spanning stretches (helical) occupy residues 93–113 (IMLLMFATPLFAGFANWIMPL), 125–145 (LNMFAYWLYLFGSTIAVGGFL), 174–194 (LWIMGLAFSGFGTILGSVNFI), 217–237 (VLLTGVLVLLAFPVLAAALFA), 262–282 (LFWFFGHPEVYIIALPFFGIV), and 294–314 (IFGYMGLIGATIAIAGLSVTV). 2 residues coordinate Cu cation: histidine 268 and tyrosine 272. The 1'-histidyl-3'-tyrosine (His-Tyr) cross-link spans 268–272 (HPEVY). Histidine 317 and histidine 318 together coordinate Cu cation. The next 2 membrane-spanning stretches (helical) occupy residues 319–339 (MYVTGGVLLPFFSFMTFLIAV) and 363–383 (MLWSTGFLITFLFGGLTGVIL). Histidine 401 lines the heme a3 pocket. Transmembrane regions (helical) follow at residues 402-422 (FHYVVFGTVVFAMFAGFHFWW), 437-457 (ITFWTLFVGFHGTFLVQHWLG), and 480-500 (ISTISSFLLGMSILPFFYNIW). Position 403 (histidine 403) interacts with Fe(II)-heme a.

Belongs to the heme-copper respiratory oxidase family. As to quaternary structure, associates with subunits II, III and IV to form cytochrome c oxidase. The cofactor is Cu(2+). Heme serves as cofactor.

The protein resides in the cell membrane. The enzyme catalyses 4 Fe(II)-[cytochrome c] + O2 + 8 H(+)(in) = 4 Fe(III)-[cytochrome c] + 2 H2O + 4 H(+)(out). Its pathway is energy metabolism; oxidative phosphorylation. Cytochrome c oxidase is the component of the respiratory chain that catalyzes the reduction of oxygen to water. Subunits 1-3 form the functional core of the enzyme complex. CO I is the catalytic subunit of the enzyme. Electrons originating in cytochrome c are transferred via the copper A center of subunit 2 and heme A of subunit 1 to the bimetallic center formed by heme A3 and copper B. This Streptomyces coelicolor (strain ATCC BAA-471 / A3(2) / M145) protein is Probable cytochrome c oxidase subunit 1-alpha (ctaD1).